A 234-amino-acid chain; its full sequence is uncharacterized protein (234 aa).

The disordered stretch occupies residues G212–G234. Residues N220–G234 show a composition bias toward low complexity.

This is an uncharacterized protein from Methanothermobacter thermautotrophicus (Methanobacterium thermoformicicum).